Consider the following 131-residue polypeptide: uncharacterized protein (131 aa).

2 consecutive transmembrane segments (helical) span residues 61-81 (LLLL…YLPI) and 102-122 (VCSI…ALRY).

Its subcellular location is the membrane. This is an uncharacterized protein from Saccharomyces cerevisiae (strain ATCC 204508 / S288c) (Baker's yeast).